We begin with the raw amino-acid sequence, 198 residues long: MAYNKKYADWKRKIWFTIKAPAIFNEVELGETPAYKPEQVIGRRVELNMALVTNNYQLQNYKGIFKITKVEGTTAKTELEGIKMYESIIQKWVEPGRDKITDSFVIKDKDNRLVRVKPVLITNRRLHRKQGTAIRNIWRNYFVELGKKLSFEDMVMKILNKEIPEQLKIQIKKIYPPLFFAIRQFYLEPREKHILLIE.

Belongs to the eukaryotic ribosomal protein eS1 family.

This chain is Small ribosomal subunit protein eS1, found in Nanoarchaeum equitans (strain Kin4-M).